Reading from the N-terminus, the 341-residue chain is Anthranilate phosphoribosyltransferase (341 aa).

5-phospho-alpha-D-ribose 1-diphosphate is bound by residues Gly81, 84–85 (GD), 91–94 (NVST), 109–117 (KHGNRSVSS), and Ser121. Gly81 serves as a coordination point for anthranilate. Ser93 is a Mg(2+) binding site. Residue Asn112 participates in anthranilate binding. Arg167 lines the anthranilate pocket. The Mg(2+) site is built by Asp226 and Glu227.

The protein belongs to the anthranilate phosphoribosyltransferase family. Homodimer. Mg(2+) serves as cofactor.

The enzyme catalyses N-(5-phospho-beta-D-ribosyl)anthranilate + diphosphate = 5-phospho-alpha-D-ribose 1-diphosphate + anthranilate. The protein operates within amino-acid biosynthesis; L-tryptophan biosynthesis; L-tryptophan from chorismate: step 2/5. In terms of biological role, catalyzes the transfer of the phosphoribosyl group of 5-phosphorylribose-1-pyrophosphate (PRPP) to anthranilate to yield N-(5'-phosphoribosyl)-anthranilate (PRA). This chain is Anthranilate phosphoribosyltransferase, found in Saccharophagus degradans (strain 2-40 / ATCC 43961 / DSM 17024).